The sequence spans 512 residues: Inositol-3-phosphate synthase (512 aa).

Residues Gly-72, Gly-73, Asn-74, Asn-75, Asp-145, Ile-182, Gln-192, Arg-195, Thr-232, Gly-233, Asn-234, Thr-235, Gly-283, Ser-284, Asp-308, Ser-311, Asn-342, Asn-343, Asp-344, Lys-357, Gly-395, Asp-396, Asp-424, and Ser-425 each contribute to the NAD(+) site.

This sequence belongs to the myo-inositol 1-phosphate synthase family. NAD(+) serves as cofactor.

It localises to the cytoplasm. It is found in the cytosol. The protein localises to the nucleus. The catalysed reaction is D-glucose 6-phosphate = 1D-myo-inositol 3-phosphate. Its pathway is polyol metabolism; myo-inositol biosynthesis; myo-inositol from D-glucose 6-phosphate: step 1/2. In terms of biological role, key enzyme in myo-inositol biosynthesis pathway that catalyzes the conversion of glucose 6-phosphate to 1-myo-inositol 1-phosphate in a NAD-dependent manner. This is Inositol-3-phosphate synthase from Mesembryanthemum crystallinum (Common ice plant).